The chain runs to 365 residues: Chorismate synthase (365 aa).

Residue arginine 46 coordinates NADP(+). Residues 123–125 (RSS), 241–242 (NG), glycine 281, 296–300 (KPTPS), and arginine 322 contribute to the FMN site.

The protein belongs to the chorismate synthase family. In terms of assembly, homotetramer. It depends on FMNH2 as a cofactor.

It catalyses the reaction 5-O-(1-carboxyvinyl)-3-phosphoshikimate = chorismate + phosphate. The protein operates within metabolic intermediate biosynthesis; chorismate biosynthesis; chorismate from D-erythrose 4-phosphate and phosphoenolpyruvate: step 7/7. Catalyzes the anti-1,4-elimination of the C-3 phosphate and the C-6 proR hydrogen from 5-enolpyruvylshikimate-3-phosphate (EPSP) to yield chorismate, which is the branch point compound that serves as the starting substrate for the three terminal pathways of aromatic amino acid biosynthesis. This reaction introduces a second double bond into the aromatic ring system. This chain is Chorismate synthase, found in Helicobacter pylori (strain J99 / ATCC 700824) (Campylobacter pylori J99).